A 383-amino-acid chain; its full sequence is Cytochrome b (383 aa).

4 consecutive transmembrane segments (helical) span residues F34–M54, W78–I99, W114–L134, and F179–I199. Positions 84 and 98 each coordinate heme b. H183 and H197 together coordinate heme b. Residue H202 coordinates a ubiquinone. Transmembrane regions (helical) follow at residues M227–L247, L289–H309, L321–G341, and Y348–P368.

This sequence belongs to the cytochrome b family. The cytochrome bc1 complex contains 3 respiratory subunits (MT-CYB, CYC1 and UQCRFS1), 2 core proteins (UQCRC1 and UQCRC2) and probably 6 low-molecular weight proteins. The cofactor is heme b.

Its subcellular location is the mitochondrion inner membrane. Its function is as follows. Component of the ubiquinol-cytochrome c reductase complex (complex III or cytochrome b-c1 complex) that is part of the mitochondrial respiratory chain. The b-c1 complex mediates electron transfer from ubiquinol to cytochrome c. Contributes to the generation of a proton gradient across the mitochondrial membrane that is then used for ATP synthesis. This Caiman crocodilus (Spectacled caiman) protein is Cytochrome b (MT-CYB).